Here is a 215-residue protein sequence, read N- to C-terminus: Octanoyltransferase (215 aa).

One can recognise a BPL/LPL catalytic domain in the interval 31–206; that stretch reads TDAPDEVWLV…QLVKHLDYAE (176 aa). Residues 70–77, 137–139, and 150–152 contribute to the substrate site; these read RGGQVTYH, SLG, and GLA. The Acyl-thioester intermediate role is filled by C168.

Belongs to the LipB family.

It localises to the cytoplasm. It carries out the reaction octanoyl-[ACP] + L-lysyl-[protein] = N(6)-octanoyl-L-lysyl-[protein] + holo-[ACP] + H(+). It participates in protein modification; protein lipoylation via endogenous pathway; protein N(6)-(lipoyl)lysine from octanoyl-[acyl-carrier-protein]: step 1/2. In terms of biological role, catalyzes the transfer of endogenously produced octanoic acid from octanoyl-acyl-carrier-protein onto the lipoyl domains of lipoate-dependent enzymes. Lipoyl-ACP can also act as a substrate although octanoyl-ACP is likely to be the physiological substrate. This chain is Octanoyltransferase, found in Pseudomonas fluorescens (strain ATCC BAA-477 / NRRL B-23932 / Pf-5).